The sequence spans 340 residues: Ketol-acid reductoisomerase (NADP(+)) (340 aa).

The KARI N-terminal Rossmann domain maps to 3–183 (INVFYDKDCN…GGGRTGIIET (181 aa)). NADP(+)-binding positions include 26-29 (FGSQ), arginine 49, serine 54, and 84-87 (DENQ). Histidine 109 is an active-site residue. Glycine 135 is an NADP(+) binding site. Residues 184–329 (TFKDETETDL…VKLRNMMPWI (146 aa)) enclose the KARI C-terminal knotted domain. Aspartate 192, glutamate 196, glutamate 228, and glutamate 232 together coordinate Mg(2+). Serine 253 serves as a coordination point for substrate.

It belongs to the ketol-acid reductoisomerase family. Requires Mg(2+) as cofactor.

The catalysed reaction is (2R)-2,3-dihydroxy-3-methylbutanoate + NADP(+) = (2S)-2-acetolactate + NADPH + H(+). It catalyses the reaction (2R,3R)-2,3-dihydroxy-3-methylpentanoate + NADP(+) = (S)-2-ethyl-2-hydroxy-3-oxobutanoate + NADPH + H(+). It participates in amino-acid biosynthesis; L-isoleucine biosynthesis; L-isoleucine from 2-oxobutanoate: step 2/4. Its pathway is amino-acid biosynthesis; L-valine biosynthesis; L-valine from pyruvate: step 2/4. Its function is as follows. Involved in the biosynthesis of branched-chain amino acids (BCAA). Catalyzes an alkyl-migration followed by a ketol-acid reduction of (S)-2-acetolactate (S2AL) to yield (R)-2,3-dihydroxy-isovalerate. In the isomerase reaction, S2AL is rearranged via a Mg-dependent methyl migration to produce 3-hydroxy-3-methyl-2-ketobutyrate (HMKB). In the reductase reaction, this 2-ketoacid undergoes a metal-dependent reduction by NADPH to yield (R)-2,3-dihydroxy-isovalerate. The sequence is that of Ketol-acid reductoisomerase (NADP(+)) from Aliarcobacter butzleri (strain RM4018) (Arcobacter butzleri).